A 463-amino-acid polypeptide reads, in one-letter code: Cytoplasmic tRNA 2-thiolation protein 2 (463 aa).

The protein belongs to the CTU2/NCS2 family.

It is found in the cytoplasm. The protein operates within tRNA modification; 5-methoxycarbonylmethyl-2-thiouridine-tRNA biosynthesis. Functionally, plays a central role in 2-thiolation of mcm(5)S(2)U at tRNA wobble positions of tRNA(Lys), tRNA(Glu) and tRNA(Gln). May act by forming a heterodimer with NCS6 that ligates sulfur from thiocarboxylated URM1 onto the uridine of tRNAs at wobble position. Prior mcm(5) tRNA modification by the elongator complex is required for 2-thiolation. May also be involved in protein urmylation. The chain is Cytoplasmic tRNA 2-thiolation protein 2 from Kluyveromyces lactis (strain ATCC 8585 / CBS 2359 / DSM 70799 / NBRC 1267 / NRRL Y-1140 / WM37) (Yeast).